A 203-amino-acid chain; its full sequence is E3 ubiquitin-protein ligase RNF152 (203 aa).

The RING-type zinc finger occupies 12 to 55; the sequence is CQICFNYYSPRRRPKLLDCKHTCCSVCLQQMRTSQKDVRCPWCR. The tract at residues 106 to 165 is necessary for interaction with RRAGA; the sequence is ISKERTLLPGDMGCRLLPGSQQKSLTVVTIPAEQQPLQGGAPQEAVEEEPDRRGVAKSST. The tract at residues 140 to 159 is disordered; sequence QPLQGGAPQEAVEEEPDRRG. Residues 167-187 form a helical membrane-spanning segment; that stretch reads SGVCTVILVACVLVFLLGIVL.

It belongs to the RNF152 family. In terms of assembly, interacts with RRAGA (inactive GDP-bound form); stimulated by amino acid starvation. Interacts with SEC16A. Post-translationally, ubiquitinated. Autoubiquitinated in vitro, leading to its degradation by the proteasome.

The protein resides in the lysosome membrane. The catalysed reaction is S-ubiquitinyl-[E2 ubiquitin-conjugating enzyme]-L-cysteine + [acceptor protein]-L-lysine = [E2 ubiquitin-conjugating enzyme]-L-cysteine + N(6)-ubiquitinyl-[acceptor protein]-L-lysine.. It participates in protein modification; protein ubiquitination. E3 ubiquitin-protein ligase that acts as a negative regulator of mTORC1 signaling by mediating ubiquitination of RagA/RRAGA and RHEB. Catalyzes 'Lys-63'-linked polyubiquitination of RagA/RRAGA in response to amino acid starvation, thereby regulating mTORC1 signaling. Also mediates monoubiquitination of RHEB, promoting its association with the TSC-TBC complex and subsequent inhibition. Also mediates 'Lys-48'-linked polyubiquitination of target proteins and their subsequent targeting to the proteasome for degradation. Induces apoptosis when overexpressed. This Rattus norvegicus (Rat) protein is E3 ubiquitin-protein ligase RNF152.